The primary structure comprises 106 residues: Foxo1-corepressor (106 aa).

The tract at residues 1 to 44 (MGGPTRRHQEEGSAECLGGPSTRAAPGPGLRDFHFTTAGPSKAD) is disordered. The short motif at 78–87 (IGTLYIRLDL) is the Nuclear export signal element. At Thr93 the chain carries Phosphothreonine; by PKA.

In terms of assembly, interacts with FOXO1 (via N-terminal domain); the interaction is direct, occurs in a forskolin-independent manner that prevents SIRT1 binding to FOXO1. Interacts with FOXO3. Does not interact with FOXO4. In terms of processing, phosphorylated at Thr-93 by PKA, leading to import into the nucleus. As to expression, expressed in adipocytes. Expressed in brown and white adipose tissue but not in liver. Protein levels in brown and white adipose tissues decrease following fasting (at protein level). Expressed in white and brown adipose tissues. Expressed in adipocytes. Not expressed in liver, skeletal muscle and brain.

The protein localises to the cytoplasm. It is found in the cytosol. Its subcellular location is the nucleus. Regulator of adipocytes that acts by repressing FOXO1 transcriptional activity. Acts by promoting acetylation of FOXO1, both by preventing the interaction between FOXO1 and SIRT1 deacetylase, and by mediating acetyltransferase activity in vitro. Regulates insulin sensitivity and energy metabolism. The polypeptide is Foxo1-corepressor (Fcor) (Mus musculus (Mouse)).